Consider the following 325-residue polypeptide: GMP reductase (325 aa).

The active-site Thioimidate intermediate is the Cys-174. NADP(+) is bound at residue 203–226 (IIADGGIRTHGDIAKSIRFGATMV).

The protein belongs to the IMPDH/GMPR family. GuaC type 2 subfamily.

It catalyses the reaction IMP + NH4(+) + NADP(+) = GMP + NADPH + 2 H(+). Functionally, catalyzes the irreversible NADPH-dependent deamination of GMP to IMP. It functions in the conversion of nucleobase, nucleoside and nucleotide derivatives of G to A nucleotides, and in maintaining the intracellular balance of A and G nucleotides. In Helicobacter pylori (strain G27), this protein is GMP reductase.